The following is a 568-amino-acid chain: Phosphomethylpyrimidine synthase (568 aa).

Substrate contacts are provided by residues asparagine 188, methionine 217, tyrosine 246, histidine 282, 302-304 (SRG), 343-346 (DGLR), and glutamate 382. Histidine 386 contacts Zn(2+). A substrate-binding site is contributed by tyrosine 409. Residue histidine 450 participates in Zn(2+) binding. Residues cysteine 530, cysteine 533, and cysteine 538 each contribute to the [4Fe-4S] cluster site.

Belongs to the ThiC family. Homodimer. [4Fe-4S] cluster serves as cofactor.

It catalyses the reaction 5-amino-1-(5-phospho-beta-D-ribosyl)imidazole + S-adenosyl-L-methionine = 4-amino-2-methyl-5-(phosphooxymethyl)pyrimidine + CO + 5'-deoxyadenosine + formate + L-methionine + 3 H(+). Its pathway is cofactor biosynthesis; thiamine diphosphate biosynthesis. In terms of biological role, catalyzes the synthesis of the hydroxymethylpyrimidine phosphate (HMP-P) moiety of thiamine from aminoimidazole ribotide (AIR) in a radical S-adenosyl-L-methionine (SAM)-dependent reaction. The chain is Phosphomethylpyrimidine synthase from Idiomarina loihiensis (strain ATCC BAA-735 / DSM 15497 / L2-TR).